Reading from the N-terminus, the 405-residue chain is Alpha-1-antiproteinase S (405 aa).

The first 24 residues, 1 to 24 (MPSAIPRGLLLLAGLCCLVFGIMA), serve as a signal peptide directing secretion. Asn-57, Asn-94, Asn-157, and Asn-258 each carry an N-linked (GlcNAc...) asparagine glycan. The RCL stretch occupies residues 360–379 (GATMMEFMPMSLPEDLSFNK).

The protein belongs to the serpin family.

The protein resides in the secreted. In terms of biological role, inhibits elastase, chymotrypsin, cathepsin G, plasmin, and trypsin. The chain is Alpha-1-antiproteinase S from Cavia porcellus (Guinea pig).